Here is a 355-residue protein sequence, read N- to C-terminus: Probable protein phosphatase 2C 21 (355 aa).

Positions 23 to 329 constitute a PPM-type phosphatase domain; the sequence is RFGLSSMQGW…DNMTIILVQF (307 aa). Positions 57, 58, 272, and 320 each coordinate Mn(2+). A disordered region spans residues 329–355; it reads FKKPNPSETEPEDSKPEPSEDEPSSSS.

This sequence belongs to the PP2C family. Mg(2+) serves as cofactor. Mn(2+) is required as a cofactor.

The catalysed reaction is O-phospho-L-seryl-[protein] + H2O = L-seryl-[protein] + phosphate. The enzyme catalyses O-phospho-L-threonyl-[protein] + H2O = L-threonyl-[protein] + phosphate. This is Probable protein phosphatase 2C 21 (PPC4-2) from Arabidopsis thaliana (Mouse-ear cress).